A 307-amino-acid polypeptide reads, in one-letter code: uncharacterized protein (307 aa).

This is an uncharacterized protein from Archaeoglobus fulgidus (strain ATCC 49558 / DSM 4304 / JCM 9628 / NBRC 100126 / VC-16).